Consider the following 766-residue polypeptide: Protein transport protein Sec23B (766 aa).

Alanine 2 bears the N-acetylalanine mark. Zn(2+) is bound by residues cysteine 61, cysteine 66, cysteine 85, and cysteine 88. Lysine 564 carries the post-translational modification N6-acetyllysine. The Gelsolin-like repeat unit spans residues 633-719; the sequence is PEPVLLDSSS…EHGGSQARFL (87 aa).

The protein belongs to the SEC23/SEC24 family. SEC23 subfamily. In terms of assembly, COPII is composed of at least five proteins: the Sec23/24 complex, the Sec13/31 complex and Sar1. Interacts with SAR1A.

The protein localises to the cytoplasmic vesicle. It is found in the COPII-coated vesicle membrane. The protein resides in the endoplasmic reticulum membrane. Its subcellular location is the cytoplasm. It localises to the cytosol. In terms of biological role, component of the coat protein complex II (COPII) which promotes the formation of transport vesicles from the endoplasmic reticulum (ER). The coat has two main functions, the physical deformation of the endoplasmic reticulum membrane into vesicles and the selection of cargo molecules for their transport to the Golgi complex. The protein is Protein transport protein Sec23B of Pongo abelii (Sumatran orangutan).